The chain runs to 464 residues: Protein FAM90A23 (464 aa).

Disordered stretches follow at residues 1–42, 69–389, and 415–437; these read MMAR…DPRL, VPAT…HDGA, and HSPE…SEAP. 2 stretches are compositionally biased toward basic and acidic residues: residues 74 to 89 and 97 to 114; these read GKKE…KPRA and NKDK…DPQR. Residues 180–197 show a composition bias toward low complexity; it reads LASLSPLRKASLSSSSSL.

This sequence belongs to the FAM90 family.

The protein is Protein FAM90A23 of Homo sapiens (Human).